A 370-amino-acid polypeptide reads, in one-letter code: Cytochrome b (370 aa).

Transmembrane regions (helical) follow at residues 25-45 (FGSM…FLAV), 69-90 (WLMQ…YIHI), 105-125 (WLSG…GYVL), and 170-190 (FFAL…LHIM). Heme b is bound by residues H75 and H89. 2 residues coordinate heme b: H174 and H188. H193 provides a ligand contact to a ubiquinone. 4 helical membrane passes run 218–238 (YKDL…VSFF), 280–300 (LGGA…PFTH), 312–332 (FMQL…WTAT), and 339–358 (FTTI…ISNP).

It belongs to the cytochrome b family. In terms of assembly, the cytochrome bc1 complex contains 3 respiratory subunits (MT-CYB, CYC1 and UQCRFS1), 2 core proteins (UQCRC1 and UQCRC2) and probably 6 low-molecular weight proteins. Requires heme b as cofactor.

It is found in the mitochondrion inner membrane. Functionally, component of the ubiquinol-cytochrome c reductase complex (complex III or cytochrome b-c1 complex) that is part of the mitochondrial respiratory chain. The b-c1 complex mediates electron transfer from ubiquinol to cytochrome c. Contributes to the generation of a proton gradient across the mitochondrial membrane that is then used for ATP synthesis. The chain is Cytochrome b (MT-CYB) from Chilabothrus fordii (Ford's boa).